Here is a 328-residue protein sequence, read N- to C-terminus: UPF0194 membrane protein YPTS_1292 (328 aa).

The signal sequence occupies residues 1–22 (MNRKKIIVAAVIVALLATLAYG). Coiled coils occupy residues 80–109 (YLNA…REEE) and 142–209 (AVSA…ILLA).

This sequence belongs to the UPF0194 family.

The protein resides in the periplasm. This is UPF0194 membrane protein YPTS_1292 from Yersinia pseudotuberculosis serotype IB (strain PB1/+).